A 480-amino-acid polypeptide reads, in one-letter code: Type VI lipase adapter protein Tla3 (480 aa).

Positions 410–458 (ISSPTPGKKPVHDPFGVDLLPQTASGDGPPPSADPVAPASRLTTRLPPG) are disordered.

As to quaternary structure, interacts with the Tle3 toxin on one side and with the H2-T6SS component VgrG2b on the other side.

Its subcellular location is the cytoplasm. Functionally, adapter protein that targets and loads the Tle3 toxin onto the H2 type VI secretion system (H2-T6SS) machinery through an interaction with the TTR domain of VgrG2b. Seems specific for Tle3. This chain is Type VI lipase adapter protein Tla3, found in Pseudomonas aeruginosa (strain ATCC 15692 / DSM 22644 / CIP 104116 / JCM 14847 / LMG 12228 / 1C / PRS 101 / PAO1).